The chain runs to 70 residues: Small ribosomal subunit protein bS21 (70 aa).

It belongs to the bacterial ribosomal protein bS21 family.

The polypeptide is Small ribosomal subunit protein bS21 (Campylobacter hominis (strain ATCC BAA-381 / DSM 21671 / CCUG 45161 / LMG 19568 / NCTC 13146 / CH001A)).